The primary structure comprises 750 residues: Photosystem I P700 chlorophyll a apoprotein A1 (750 aa).

8 helical membrane-spanning segments follow: residues 70 to 93, 156 to 179, 195 to 219, 291 to 309, 346 to 369, 385 to 411, 433 to 455, and 531 to 549; these read VFSAHFGQLSIIFLWLSGMYFHGA, LYCTAIGALVFAALMLFAGWFHYH, LNHHLAGLLGLGSLSWAGHQVHVSL, IAHHHLAIAILFLIAGHMY, WHAQLSLNLAMLGSLTIIVAHHMY, LSLFTHHMWIGGFLIVGAAAHAAIFMV, AIISHLNWVCIFLGFHSFGLYIH, and FLVHHIHAFTIHVTVLILL. Residues Cys-573 and Cys-582 each coordinate [4Fe-4S] cluster. The next 2 helical transmembrane spans lie at 589–610 and 664–686; these read HVFLGLFWMYNAISVVIFHFSW and LSAYGLFFLGAHFVWAFSLMFLF. A chlorophyll a'-binding site is contributed by His-675. Positions 683 and 691 each coordinate chlorophyll a. Phylloquinone is bound at residue Trp-692. Residues 724 to 744 traverse the membrane as a helical segment; that stretch reads AVGVTHYLLGGIATTWAFFLA.

The protein belongs to the PsaA/PsaB family. The PsaA/B heterodimer binds the P700 chlorophyll special pair and subsequent electron acceptors. PSI consists of a core antenna complex that captures photons, and an electron transfer chain that converts photonic excitation into a charge separation. The eukaryotic PSI reaction center is composed of at least 11 subunits. Requires P700 is a chlorophyll a/chlorophyll a' dimer, A0 is one or more chlorophyll a, A1 is one or both phylloquinones and FX is a shared 4Fe-4S iron-sulfur center. as cofactor.

It localises to the plastid. Its subcellular location is the chloroplast thylakoid membrane. It catalyses the reaction reduced [plastocyanin] + hnu + oxidized [2Fe-2S]-[ferredoxin] = oxidized [plastocyanin] + reduced [2Fe-2S]-[ferredoxin]. Functionally, psaA and PsaB bind P700, the primary electron donor of photosystem I (PSI), as well as the electron acceptors A0, A1 and FX. PSI is a plastocyanin-ferredoxin oxidoreductase, converting photonic excitation into a charge separation, which transfers an electron from the donor P700 chlorophyll pair to the spectroscopically characterized acceptors A0, A1, FX, FA and FB in turn. Oxidized P700 is reduced on the lumenal side of the thylakoid membrane by plastocyanin. The chain is Photosystem I P700 chlorophyll a apoprotein A1 from Arabidopsis thaliana (Mouse-ear cress).